The primary structure comprises 391 residues: Galactarate dehydratase (D-threo-forming) (391 aa).

Arg15 contributes to the substrate binding site. Residues Asp42 and His45 each contribute to the Mg(2+) site. Tyr89 is a substrate binding site. The active-site Proton donor is the Tyr90. The Proton acceptor role is filled by Tyr164. Residues Asp193, Glu221, and His246 each contribute to the Mg(2+) site. Thr296 lines the substrate pocket. Thr297 lines the Mg(2+) pocket. Arg385 is a substrate binding site.

It belongs to the mandelate racemase/muconate lactonizing enzyme family. It depends on Mg(2+) as a cofactor.

The catalysed reaction is galactarate = (2S,3R)-dihydroxy-5-oxohexanedioate + H2O. In terms of biological role, catalyzes the regioselective dehydration of galactarate into 2-keto-D-threo-4,5-dihydroxyadipate ((2S,3R)-dihydroxy-5-oxohexanedioate). Is not active on other acid sugars. This is Galactarate dehydratase (D-threo-forming) from Oceanobacillus iheyensis (strain DSM 14371 / CIP 107618 / JCM 11309 / KCTC 3954 / HTE831).